We begin with the raw amino-acid sequence, 806 residues long: Phenylalanine--tRNA ligase beta subunit (806 aa).

Residues 40–155 (NKGVKGVVVG…SDAEVGADAL (116 aa)) enclose the tRNA-binding domain. One can recognise a B5 domain in the interval 409–484 (VQERTVSVTA…RLYGYDHIPV (76 aa)). Mg(2+) contacts are provided by aspartate 462, aspartate 468, glutamate 471, and glutamate 472. The 94-residue stretch at 712–805 (PRFPSMTRDM…VEEKFGAELR (94 aa)) folds into the FDX-ACB domain.

This sequence belongs to the phenylalanyl-tRNA synthetase beta subunit family. Type 1 subfamily. Tetramer of two alpha and two beta subunits. Requires Mg(2+) as cofactor.

The protein resides in the cytoplasm. It catalyses the reaction tRNA(Phe) + L-phenylalanine + ATP = L-phenylalanyl-tRNA(Phe) + AMP + diphosphate + H(+). In Bacillus cereus (strain ZK / E33L), this protein is Phenylalanine--tRNA ligase beta subunit.